The sequence spans 417 residues: UDP-N-acetylglucosamine 1-carboxyvinyltransferase (417 aa).

Position 22–23 (22–23) interacts with phosphoenolpyruvate; it reads KN. Residue Arg94 coordinates UDP-N-acetyl-alpha-D-glucosamine. Catalysis depends on Cys118, which acts as the Proton donor. At Cys118 the chain carries 2-(S-cysteinyl)pyruvic acid O-phosphothioketal. UDP-N-acetyl-alpha-D-glucosamine is bound by residues 123–127, Asp306, and Ile328; that span reads RPIDQ.

Belongs to the EPSP synthase family. MurA subfamily.

The protein resides in the cytoplasm. It carries out the reaction phosphoenolpyruvate + UDP-N-acetyl-alpha-D-glucosamine = UDP-N-acetyl-3-O-(1-carboxyvinyl)-alpha-D-glucosamine + phosphate. It functions in the pathway cell wall biogenesis; peptidoglycan biosynthesis. In terms of biological role, cell wall formation. Adds enolpyruvyl to UDP-N-acetylglucosamine. This chain is UDP-N-acetylglucosamine 1-carboxyvinyltransferase, found in Clostridium botulinum (strain ATCC 19397 / Type A).